A 642-amino-acid chain; its full sequence is Bud site selection protein 5 (642 aa).

Positions 224 to 339 (EVFRIQLYLN…DIVQLFINKK (116 aa)) constitute an N-terminal Ras-GEF domain. The region spanning 412–640 (SPWSLAKTLT…YQVSIAKVPR (229 aa)) is the Ras-GEF domain.

Interacts with AXL2, BEM1, GSP1 and in haploid cells with AXL1.

It localises to the bud neck. Its subcellular location is the cytoplasm. The protein resides in the cell cortex. Its function is as follows. GDP-GTP exchange factor (GEF) for the small GTPase BUD1/RSR1. Regulates the activity of BUD1 together with BUD2 which is a GTPase-activating protein (GAP) of BUD1. Required to produce both the axial and bipolar patterns of bud site selection. Determines the orientation of division axis. Overexpression can suppress mutations in PRP20 which is the GEF for GSP1. May be a cytoplasmic GEF for GSP1. Might also act on the Ras-like protein CDC42. Appears to bind to Ras proteins but not to activate them. The protein is Bud site selection protein 5 (BUD5) of Saccharomyces cerevisiae (strain ATCC 204508 / S288c) (Baker's yeast).